We begin with the raw amino-acid sequence, 173 residues long: Crossover junction endodeoxyribonuclease RuvC (173 aa).

Residues Asp8, Glu67, and Asp139 contribute to the active site. Mg(2+) contacts are provided by Asp8, Glu67, and Asp139.

The protein belongs to the RuvC family. In terms of assembly, homodimer which binds Holliday junction (HJ) DNA. The HJ becomes 2-fold symmetrical on binding to RuvC with unstacked arms; it has a different conformation from HJ DNA in complex with RuvA. In the full resolvosome a probable DNA-RuvA(4)-RuvB(12)-RuvC(2) complex forms which resolves the HJ. Mg(2+) is required as a cofactor.

Its subcellular location is the cytoplasm. The catalysed reaction is Endonucleolytic cleavage at a junction such as a reciprocal single-stranded crossover between two homologous DNA duplexes (Holliday junction).. Its function is as follows. The RuvA-RuvB-RuvC complex processes Holliday junction (HJ) DNA during genetic recombination and DNA repair. Endonuclease that resolves HJ intermediates. Cleaves cruciform DNA by making single-stranded nicks across the HJ at symmetrical positions within the homologous arms, yielding a 5'-phosphate and a 3'-hydroxyl group; requires a central core of homology in the junction. The consensus cleavage sequence is 5'-(A/T)TT(C/G)-3'. Cleavage occurs on the 3'-side of the TT dinucleotide at the point of strand exchange. HJ branch migration catalyzed by RuvA-RuvB allows RuvC to scan DNA until it finds its consensus sequence, where it cleaves and resolves the cruciform DNA. In Salmonella choleraesuis (strain SC-B67), this protein is Crossover junction endodeoxyribonuclease RuvC.